The chain runs to 56 residues: MGHSNVWNSHPKKYGPGSRLCRVCGNSHGLIRKYGLNCCRQCFRSNAKEIGFIKYR.

Residues cysteine 21, cysteine 24, cysteine 39, and cysteine 42 each contribute to the Zn(2+) site.

It belongs to the universal ribosomal protein uS14 family. It depends on Zn(2+) as a cofactor.

This is Small ribosomal subunit protein uS14z/uS14y/uS14x (RPS29A) from Arabidopsis thaliana (Mouse-ear cress).